The following is a 405-amino-acid chain: Argininosuccinate synthase (405 aa).

Residues 10-18 (AFSGGLDTS) and Ala37 contribute to the ATP site. Tyr90 and Ser95 together coordinate L-citrulline. Gly120 contacts ATP. Residues Thr122, Asn126, and Asp127 each contribute to the L-aspartate site. Residue Asn126 coordinates L-citrulline. Positions 130, 181, 190, 266, and 278 each coordinate L-citrulline.

It belongs to the argininosuccinate synthase family. Type 1 subfamily. In terms of assembly, homotetramer.

The protein localises to the cytoplasm. It catalyses the reaction L-citrulline + L-aspartate + ATP = 2-(N(omega)-L-arginino)succinate + AMP + diphosphate + H(+). The protein operates within amino-acid biosynthesis; L-arginine biosynthesis; L-arginine from L-ornithine and carbamoyl phosphate: step 2/3. This chain is Argininosuccinate synthase, found in Rhizorhabdus wittichii (strain DSM 6014 / CCUG 31198 / JCM 15750 / NBRC 105917 / EY 4224 / RW1) (Sphingomonas wittichii).